An 86-amino-acid polypeptide reads, in one-letter code: Dolichyl-diphosphooligosaccharide--protein glycosyltransferase subunit OST5 (86 aa).

The Lumenal portion of the chain corresponds to 2–27 (TYEQLYKEFHSSKSFQPFIHLDTQPK). A helical membrane pass occupies residues 28-48 (FAICGLIVTLAVLSSALFAVG). Residues 49 to 56 (SKSSYIKK) lie on the Cytoplasmic side of the membrane. Residues 57–77 (LFFYTILSVIGSLFAGLTTVF) form a helical membrane-spanning segment. Residues 78–86 (ASNSFGVYV) lie on the Lumenal side of the membrane.

The protein belongs to the OST5 family. In terms of assembly, component of the oligosaccharyltransferase (OST) complex, which appears to exist in two assemblies comprising OST1, OST2, OST4, OST5, STT3, SWP1, WPB1, and either OST3 or OST6. OST assembly occurs through the formation of 3 subcomplexes. Subcomplex 1 contains OST1 and OST5, subcomplex 2 contains STT3, OST3, and OST4, and subcomplex 3 contains OST2, WBP1, and SWP1.

It localises to the endoplasmic reticulum membrane. The protein operates within protein modification; protein glycosylation. In terms of biological role, subunit of the oligosaccharyl transferase (OST) complex that catalyzes the initial transfer of a defined glycan (Glc(3)Man(9)GlcNAc(2) in eukaryotes) from the lipid carrier dolichol-pyrophosphate to an asparagine residue within an Asn-X-Ser/Thr consensus motif in nascent polypeptide chains, the first step in protein N-glycosylation. N-glycosylation occurs cotranslationally and the complex associates with the Sec61 complex at the channel-forming translocon complex that mediates protein translocation across the endoplasmic reticulum (ER). All subunits are required for a maximal enzyme activity. The chain is Dolichyl-diphosphooligosaccharide--protein glycosyltransferase subunit OST5 (OST5) from Saccharomyces cerevisiae (strain ATCC 204508 / S288c) (Baker's yeast).